A 212-amino-acid chain; its full sequence is Large ribosomal subunit protein uL3 (212 aa).

Positions 135 to 156 are disordered; that stretch reads MTHGNSRSHRVPGSIGQNQSPG. The residue at position 153 (Gln-153) is an N5-methylglutamine.

The protein belongs to the universal ribosomal protein uL3 family. In terms of assembly, part of the 50S ribosomal subunit. Forms a cluster with proteins L14 and L19. Methylated by PrmB.

Its function is as follows. One of the primary rRNA binding proteins, it binds directly near the 3'-end of the 23S rRNA, where it nucleates assembly of the 50S subunit. This chain is Large ribosomal subunit protein uL3, found in Tolumonas auensis (strain DSM 9187 / NBRC 110442 / TA 4).